A 245-amino-acid chain; its full sequence is DNA polymerase sliding clamp 1 (245 aa).

It belongs to the PCNA family. In terms of assembly, the subunits circularize to form a toroid; DNA passes through its center. Replication factor C (RFC) is required to load the toroid on the DNA. Forms a dimeric complex with PCNA3 and a trimeric complex with PCNA2 and PCNA3; does not form homotrimers.

In terms of biological role, sliding clamp subunit that acts as a moving platform for DNA processing. Responsible for tethering the catalytic subunit of DNA polymerase and other proteins to DNA during high-speed replication. The trimeric complex inhibits DNA ligase and both 3'-5' and 5'-3' activity of Hel308 (Hjm) helicase, but stimulates Hjc, the Holliday junction cleavage enzyme. The polypeptide is DNA polymerase sliding clamp 1 (Sulfurisphaera tokodaii (strain DSM 16993 / JCM 10545 / NBRC 100140 / 7) (Sulfolobus tokodaii)).